Reading from the N-terminus, the 78-residue chain is Leukemia-associated protein 1 (78 aa).

Its function is as follows. May act as a tumor suppressor. The polypeptide is Leukemia-associated protein 1 (DLEU1) (Homo sapiens (Human)).